Here is an 848-residue protein sequence, read N- to C-terminus: Probable serine/threonine-protein kinase DDB_G0278535 (848 aa).

Composition is skewed to low complexity over residues 1-52 (MNKS…NNNH), 60-85 (TAAT…TSST), and 95-116 (TSNS…VSTS). A disordered region spans residues 1-117 (MNKSSSASTV…SSSPQVSTSV (117 aa)). 5 ANK repeats span residues 181 to 212 (MDQT…KMDI), 218 to 248 (SGYT…NVNI), 252 to 285 (DKNS…NVNA), 289 to 320 (NGET…EVNV), and 324 to 353 (RGES…DITI). One can recognise an SAM domain in the interval 378–441 (KNVQDIFNWL…IRNCRILRDQ (64 aa)). A disordered region spans residues 448–478 (NSNVTTGSGSSGSTTTTTTTTTTTSGCGGLN). Over residues 452 to 472 (TTGSGSSGSTTTTTTTTTTTS) the composition is skewed to low complexity. In terms of domain architecture, Protein kinase spans 529-799 (LEYTLKLGSG…TLNRLRHEYM (271 aa)). Residues 535-543 (LGSGSSGKV) and Lys-556 each bind ATP. The active-site Proton acceptor is Asp-650. Positions 810 to 848 (RKLPSLSPPPQPTTTTTTTTSSSTSTNNINNNINNNNNT) are disordered. Residues 822-848 (TTTTTTTTSSSTSTNNINNNINNNNNT) show a composition bias toward low complexity.

This sequence belongs to the protein kinase superfamily. TKL Ser/Thr protein kinase family.

It carries out the reaction L-seryl-[protein] + ATP = O-phospho-L-seryl-[protein] + ADP + H(+). The catalysed reaction is L-threonyl-[protein] + ATP = O-phospho-L-threonyl-[protein] + ADP + H(+). The chain is Probable serine/threonine-protein kinase DDB_G0278535 from Dictyostelium discoideum (Social amoeba).